Reading from the N-terminus, the 479-residue chain is Catalase A (479 aa).

Over residues 1 to 21 the composition is skewed to polar residues; it reads MSKILTTASGAPVADNQNSRS. Residues 1 to 25 form a disordered region; sequence MSKILTTASGAPVADNQNSRSAGPR. Residues His53 and Asn126 contribute to the active site. Residue Tyr336 participates in heme binding. Positions 350 to 376 are disordered; that stretch reads QLPVNAPRCPVNSYQRDGSMATGSYGS. Residues 361-376 are compositionally biased toward polar residues; sequence NSYQRDGSMATGSYGS.

This sequence belongs to the catalase family. Requires heme as cofactor.

It carries out the reaction 2 H2O2 = O2 + 2 H2O. Its activity is regulated as follows. Activated by peroxide. Its function is as follows. The major expressed catalase protein in strain Corvallis in stationary phase. Decomposes hydrogen peroxide into water and oxygen; serves to protect cells from the toxic effects of hydrogen peroxide. This chain is Catalase A (katA), found in Pseudomonas putida (Arthrobacter siderocapsulatus).